The chain runs to 440 residues: GTPase Der (440 aa).

EngA-type G domains lie at 4 to 169 (PVVA…PEED) and 178 to 353 (IKVA…DQAA). Residues 10-17 (GRPNVGKS), 57-61 (DTGGI), 120-123 (NKVD), 184-191 (GKPNVGKS), 231-235 (DTAGI), and 296-299 (NKWD) each bind GTP. The region spanning 354-438 (MRISTGVLND…PIKFILREKE (85 aa)) is the KH-like domain.

Belongs to the TRAFAC class TrmE-Era-EngA-EngB-Septin-like GTPase superfamily. EngA (Der) GTPase family. As to quaternary structure, associates with the 50S ribosomal subunit.

Its function is as follows. GTPase that plays an essential role in the late steps of ribosome biogenesis. The polypeptide is GTPase Der (Acetivibrio thermocellus (strain ATCC 27405 / DSM 1237 / JCM 9322 / NBRC 103400 / NCIMB 10682 / NRRL B-4536 / VPI 7372) (Clostridium thermocellum)).